A 140-amino-acid chain; its full sequence is ATP synthase epsilon chain (140 aa).

The protein belongs to the ATPase epsilon chain family. F-type ATPases have 2 components, CF(1) - the catalytic core - and CF(0) - the membrane proton channel. CF(1) has five subunits: alpha(3), beta(3), gamma(1), delta(1), epsilon(1). CF(0) has three main subunits: a, b and c.

The protein resides in the cell inner membrane. Its function is as follows. Produces ATP from ADP in the presence of a proton gradient across the membrane. This Xanthomonas campestris pv. campestris (strain 8004) protein is ATP synthase epsilon chain.